We begin with the raw amino-acid sequence, 316 residues long: Transcription factor MafB (316 aa).

Disordered regions lie at residues 40-78 and 116-204; these read PDRA…SPTE and HQMP…EDRF. The segment covering 55–77 has biased composition (low complexity); it reads SVSSTPISTPCSSVPSSPSFSPT. 2 stretches are compositionally biased toward basic residues: residues 130–144 and 160–172; these read GHHH…HQNH and QHPH…HHHQ. A compositionally biased stretch (low complexity) spans 177 to 198; that stretch reads PSGSSSSSQQLQNSHQQHQNSS. Residues 231–256 are basic motif; sequence RLKQKRRTLKNRGYAQSCRFKRVQQK. The bZIP domain occupies 231–294; the sequence is RLKQKRRTLK…DAYKIKCEKL (64 aa). The segment at 259-280 is leucine-zipper; it reads LENEKTQLIQQVEQLKLEVSRL.

The protein belongs to the bZIP family. Maf subfamily. In terms of assembly, homodimer or heterodimer with other bHLH-Zip transcription factors. Binds DNA as a homodimer or a heterodimer.

Its subcellular location is the nucleus. Its function is as follows. Acts as a transcriptional activator or repressor. Implicated in the regulation of cell-type specific gene expression and play a role in inductive events during lens development. The sequence is that of Transcription factor MafB (mafb) from Xenopus tropicalis (Western clawed frog).